The chain runs to 277 residues: Thiazole synthase (277 aa).

Residue Lys119 is the Schiff-base intermediate with DXP of the active site. 1-deoxy-D-xylulose 5-phosphate is bound by residues Gly180, 206–207, and 228–229; these read AG and NT.

The protein belongs to the ThiG family. As to quaternary structure, homotetramer. Forms heterodimers with either ThiH or ThiS.

Its subcellular location is the plastid. The protein resides in the chloroplast. It catalyses the reaction [ThiS sulfur-carrier protein]-C-terminal-Gly-aminoethanethioate + 2-iminoacetate + 1-deoxy-D-xylulose 5-phosphate = [ThiS sulfur-carrier protein]-C-terminal Gly-Gly + 2-[(2R,5Z)-2-carboxy-4-methylthiazol-5(2H)-ylidene]ethyl phosphate + 2 H2O + H(+). The protein operates within cofactor biosynthesis; thiamine diphosphate biosynthesis. Catalyzes the rearrangement of 1-deoxy-D-xylulose 5-phosphate (DXP) to produce the thiazole phosphate moiety of thiamine. Sulfur is provided by the thiocarboxylate moiety of the carrier protein ThiS. In vitro, sulfur can be provided by H(2)S. In Pyropia yezoensis (Susabi-nori), this protein is Thiazole synthase.